The sequence spans 480 residues: Putative auxin transporter-like protein 4 (480 aa).

The Cytoplasmic portion of the chain corresponds to 1–66 (MASEKVETIV…DAWFSCASNQ (66 aa)). The helical transmembrane segment at 67-84 (VAQVLLTLPYSFSQLGMA) threads the bilayer. At 85–86 (SG) the chain is on the extracellular side. The helical transmembrane segment at 87–107 (VAFQVFYGLMGSWTAYLISVL) threads the bilayer. At 108–143 (YVEYRTRRERDKVDFRNHVIQWFEVLDGLLGRHWRN) the chain is on the cytoplasmic side. The helical transmembrane segment at 144–164 (AGLLFNCTFLLFGSVIQLIAC) threads the bilayer. The Extracellular segment spans residues 165-179 (ASNIYYINDRLDKRT). Residues 180–200 (WTYIFGACCATTVFVPSFHNY) form a helical membrane-spanning segment. Topologically, residues 201 to 203 (RVW) are cytoplasmic. The chain crosses the membrane as a helical span at residues 204 to 224 (SFLGLLMTSYTAWYLTVAAVV). Topologically, residues 225–241 (HGKVDGAAPRAGPSKTM) are extracellular. A helical transmembrane segment spans residues 242 to 262 (VLYFTGATNILYTFGGHAVTV). The Cytoplasmic segment spans residues 263–275 (EIMHAMWRPRRFK). Residues 276 to 296 (MIYLAATAYVLTLTLPSAAAM) form a helical membrane-spanning segment. The Extracellular portion of the chain corresponds to 297-323 (YWAFGDALLDHSNAFALLPRTPWRDAA). Residues 324-344 (VVLMLIHQFITFGFACTPLYF) form a helical membrane-spanning segment. At 345–365 (VWEKAIGVHGGAGVLRRAAAR) the chain is on the cytoplasmic side. A helical membrane pass occupies residues 366–386 (LPVVLPIWFLAVIFPFFGPIN). A topological domain (extracellular) is located at residue serine 387. The chain crosses the membrane as a helical span at residues 388–408 (TVGSFLVSFTVYIIPAMAHMA). Over 409–433 (TFAPAAARENAVEPPPRALGGWPGT) the chain is Cytoplasmic. The helical transmembrane segment at 434–454 (FAANCFVVAWVLVVGFGFGGW) threads the bilayer. Residues 455–480 (ASTVNFVRQVDTFGLFTKCYQCPPRH) lie on the Extracellular side of the membrane.

The protein belongs to the amino acid/polyamine transporter 2 family. Amino acid/auxin permease (AAAP) (TC 2.A.18.1) subfamily.

It localises to the cell membrane. Its function is as follows. Carrier protein involved in proton-driven auxin influx. May mediate the formation of auxin gradient from developing leaves (site of auxin biosynthesis) to tips. The polypeptide is Putative auxin transporter-like protein 4 (Oryza sativa subsp. japonica (Rice)).